The chain runs to 580 residues: MGGGGTLVDGFRRLFHRRTASGSNQSSNAGEEAASSDLEVADDPDLVALRSIRIRVPKRKMPLPVESHKKNTVEMEFFTEYGEASQYQIQEVIGKGSYGVVAAAVDTRTGERVAIKKINDVFEHVSDATRILREIKLLRLLRHPDIVEIKHIMLPPSRREFQDIYVVFELMESDLHQVIRANDDLTPEHYQFFLYQLLRALKYIHAANVFHRDLKPKNILANSDCKLKICDFGLARASFNDAPSAIFWTDYVATRWYRAPELCGSFFSKYTPAIDIWSIGCIFAELLTGRPLFPGKNVVHQLDIITDLLGTPSSETLSRIRNEKARRYLSTMRKKHAVPFSQKFRNTDPLALRLLERLLAFDPKDRSSAEEALADPYFASLANVEREPSRHPISKLEFEFERRKLTKDDVRELIYREILEYHPQMLQEYMKGGEQISFLYPSGVDRFKRQFAHLEENYSKGERGSPLQRKHASLPRERVGVSKDGYNQQNTNDQERSADSVARTTVSPPMSQDAQQHGSAGQNGVTSTDLSSRSYLKSASISASKCVAVKDNKEPEDDYISEEMEGSVDGLSEQVSRMHS.

The interval 18-38 (RTASGSNQSSNAGEEAASSDL) is disordered. Positions 20–29 (ASGSNQSSNA) are enriched in polar residues. A Protein kinase domain is found at 87–378 (YQIQEVIGKG…AEEALADPYF (292 aa)). ATP contacts are provided by residues 93–101 (IGKGSYGVV) and Lys116. Asp213 (proton acceptor) is an active-site residue. The residue at position 249 (Thr249) is a Phosphothreonine. The short motif at 249–251 (TDY) is the TXY element. Tyr251 is modified (phosphotyrosine). The required for kinase activity and nuclear localization stretch occupies residues 325–506 (ARRYLSTMRK…SADSVARTTV (182 aa)). Positions 458 to 580 (YSKGERGSPL…LSEQVSRMHS (123 aa)) are disordered. The span at 502 to 543 (ARTTVSPPMSQDAQQHGSAGQNGVTSTDLSSRSYLKSASISA) shows a compositional bias: polar residues. A compositionally biased stretch (acidic residues) spans 554–566 (EPEDDYISEEMEG).

The protein belongs to the protein kinase superfamily. CMGC Ser/Thr protein kinase family. MAP kinase subfamily. As to quaternary structure, interacts with EREBP1. Post-translationally, dually phosphorylated on Thr-249 and Tyr-251, which activates the enzyme. Phosphorylated on tyrosine residue.

The protein resides in the cytoplasm. It is found in the nucleus. It catalyses the reaction L-seryl-[protein] + ATP = O-phospho-L-seryl-[protein] + ADP + H(+). The catalysed reaction is L-threonyl-[protein] + ATP = O-phospho-L-threonyl-[protein] + ADP + H(+). With respect to regulation, activated by threonine and tyrosine phosphorylation. Activated in response to hydrogen peroxide, salicylic acid, jasmonic acid, ethylene, fungal elicitor and infection with rice blast fungus (M.grisea). Its function is as follows. May be involved in defense signaling pathway. Phosphorylates EREBP1 transcriptional activator in vitro. Enhances DNA-binding activity of EREBP1 to the GCC box element of pathogenesis-related (PR) gene promoters. This chain is Mitogen-activated protein kinase 12 (MPK12), found in Oryza sativa subsp. japonica (Rice).